Here is a 546-residue protein sequence, read N- to C-terminus: Inosine-5'-monophosphate dehydrogenase (546 aa).

2 CBS domains span residues 135-197 and 198-254; these read FILD…VTAI and MSTD…PLAS. NAD(+) is bound by residues 292-294 and 342-344; these read DSS and GMG. Residues Gly344 and Gly346 each contribute to the K(+) site. An IMP-binding site is contributed by Ser347. Cys349 provides a ligand contact to K(+). The active-site Thioimidate intermediate is the Cys349. Residues 382–384, 405–406, and 430–434 contribute to the IMP site; these read DGG, GG, and YRGMG. The active-site Proton acceptor is Arg460. Gln472 is a binding site for IMP. Residues Glu531 and Gly532 each coordinate K(+).

Belongs to the IMPDH/GMPR family. As to quaternary structure, homotetramer. The cofactor is K(+).

The protein resides in the cytoplasm. The catalysed reaction is IMP + NAD(+) + H2O = XMP + NADH + H(+). The protein operates within purine metabolism; XMP biosynthesis via de novo pathway; XMP from IMP: step 1/1. Mycophenolic acid (MPA) is a non-competitive inhibitor that prevents formation of the closed enzyme conformation by binding to the same site as the amobile flap. In contrast, mizoribine monophosphate (MZP) is a competitive inhibitor that induces the closed conformation. MPA is a potent inhibitor of mammalian IMPDHs but a poor inhibitor of the bacterial enzymes. MZP is a more potent inhibitor of bacterial IMPDH. Catalyzes the conversion of inosine 5'-phosphate (IMP) to xanthosine 5'-phosphate (XMP), the first committed and rate-limiting step in the de novo synthesis of guanine nucleotides, and therefore plays an important role in the regulation of cell growth. This is Inosine-5'-monophosphate dehydrogenase from Aspergillus fumigatus (strain ATCC MYA-4609 / CBS 101355 / FGSC A1100 / Af293) (Neosartorya fumigata).